Here is a 662-residue protein sequence, read N- to C-terminus: DCC-interacting protein 13-beta (662 aa).

Positions 1 to 428 (MPAVDKLLLE…NSDIEDDNIV (428 aa)) are required for RAB5A binding. The BAR domain occupies 3–268 (AVDKLLLEEA…ESVYTPDIDV (266 aa)). The PH domain occupies 277 to 375 (LIQKTGYLNL…WICAVNNISR (99 aa)). Positions 486-635 (SLLQQMFIVR…LMLSVPLTND (150 aa)) constitute a PID domain. The segment at 642-662 (NDQADDTGGSPSENRGAESEA) is disordered.

As to quaternary structure, homodimer. Homotetramer. Binds RAB5A/Rab5 through an N-terminal domain. This interaction is essential for its recruitment to endosomal membranes as well as its role in cell proliferation. Binds subunits of the NuRD/MeCP1 complex. Interacts with FSHR; interaction is independent of follicle stimulating hormone stimulation. Interacts with APPL1; the interaction is decreased by adiponectin in a time-dependent manner. Forms a complex comprising APPL1, RUVBL2, CTNNB1, HDAC1 and HDAC2; interaction reduces interaction between CTNNB1, HDAC1, HDAC2 and RUVBL2 leading to the decrease of deacetylase activity of this complex; affects the recruitment of repressive complexes to the Wnt target genes. Interacts (via BAR domain) with TBC1D1; interaction is dependent of TBC1D1 phosphorylation at 'Ser-235'; interaction diminishes the phosphorylation of TBC1D1 at 'Thr-596', resulting in inhibition of SLC2A4 translocation and glucose uptake. Interacts with ANXA2; targets APPL2 to endosomes and acting in parallel to RAB5A. Interacts with RAB31 (in GTP-bound form); interaction contributes to or enhances recruitment of APPL2 to the phagosomes; interaction enhances Fc-gamma receptor-mediated phagocytosis through PI3K/Akt signaling in macrophages. Interacts with PIK3R1; forms a complex with PIK3R1 and APPL1. Interacts (via BAR domain) with ADIPOR1; hinders the accessibility of APPL1 to ADIPOR1; negatively regulates adiponectin signaling; ADIPOQ dissociates this interaction and facilitates the recruitment of APPL1 to ADIPOR1. Interacts (via BAR domain) with ADIPOR2; ADIPOQ dissociates this interaction. In terms of tissue distribution, expressed in insulin-target tissues including skeletal muscle, liver, fat, and brain. Highly expressed in kidney and pancreas. Abundantly expressed in the ventromedial hypothalamus (VMH), barely detectable in the arcuate nucleus (ARC) and paraventricular nucleus (PVN) of the hypothalamus. Also expressed in pancreatic beta-cells.

Its subcellular location is the early endosome membrane. It localises to the nucleus. The protein localises to the cell membrane. The protein resides in the endosome membrane. It is found in the cytoplasm. Its subcellular location is the cytoplasmic vesicle. It localises to the phagosome. The protein localises to the cell projection. The protein resides in the ruffle. It is found in the ruffle membrane. Its subcellular location is the phagosome membrane. Functionally, multifunctional adapter protein that binds to various membrane receptors, nuclear factors and signaling proteins to regulate many processes, such as cell proliferation, immune response, endosomal trafficking and cell metabolism. Regulates signaling pathway leading to cell proliferation through interaction with RAB5A and subunits of the NuRD/MeCP1 complex. Plays a role in immune response by modulating phagocytosis, inflammatory and innate immune responses. In macrophages, enhances Fc-gamma receptor-mediated phagocytosis through interaction with RAB31 leading to activation of PI3K/Akt signaling. In response to LPS, modulates inflammatory responses by playing a key role on the regulation of TLR4 signaling and in the nuclear translocation of RELA/NF-kappa-B p65 and the secretion of pro- and anti-inflammatory cytokines. Also functions as a negative regulator of innate immune response via inhibition of AKT1 signaling pathway by forming a complex with APPL1 and PIK3R1. Plays a role in endosomal trafficking of TGFBR1 from the endosomes to the nucleus. Plays a role in cell metabolism by regulating adiponectin and insulin signaling pathways and adaptative thermogenesis. In muscle, negatively regulates adiponectin-simulated glucose uptake and fatty acid oxidation by inhibiting adiponectin signaling pathway through APPL1 sequestration thereby antagonizing APPL1 action. In muscles, negatively regulates insulin-induced plasma membrane recruitment of GLUT4 and glucose uptake through interaction with TBC1D1. Plays a role in cold and diet-induced adaptive thermogenesis by activating ventromedial hypothalamus (VMH) neurons throught AMPK inhibition which enhances sympathetic outflow to subcutaneous white adipose tissue (sWAT), sWAT beiging and cold tolerance. Also plays a role in other signaling pathways namely Wnt/beta-catenin, HGF and glucocorticoid receptor signaling. Positive regulator of beta-catenin/TCF-dependent transcription through direct interaction with RUVBL2/reptin resulting in the relief of RUVBL2-mediated repression of beta-catenin/TCF target genes by modulating the interactions within the beta-catenin-reptin-HDAC complex. May affect adult neurogenesis in hippocampus and olfactory system via regulating the sensitivity of glucocorticoid receptor. Required for fibroblast migration through HGF cell signaling. This Mus musculus (Mouse) protein is DCC-interacting protein 13-beta.